The chain runs to 305 residues: MLKQRTIKQIVKTVGIGLHSGRKVELTLRPAAPDTGIVFSRVDLATPVDIPASAMAIGDTRMASVLQKDGARVSTIEHLMSACAGLGIDNLYIDVTAEEIPIMDGSAGSFVFLIQSAGIEEQNAAKKFIKVTKPVEIRDGDKFARLDPYFGFKLKFTIDFRHPAVDKTGQALEVDFANTSYVREIARARTFGFAHEVEMMRELGLARGGSMDNAIVLDEYRILNNDGLRYDDEFVKHKMLDAIGDLYVIGHPLLAAYDAYKSGHGLNNALLRELLAHEDSYEIVTFDDTQKAPRGFAYETQTAFA.

Positions 78, 237, and 241 each coordinate Zn(2+). His264 (proton donor) is an active-site residue.

Belongs to the LpxC family. Zn(2+) is required as a cofactor.

It catalyses the reaction a UDP-3-O-[(3R)-3-hydroxyacyl]-N-acetyl-alpha-D-glucosamine + H2O = a UDP-3-O-[(3R)-3-hydroxyacyl]-alpha-D-glucosamine + acetate. Its pathway is glycolipid biosynthesis; lipid IV(A) biosynthesis; lipid IV(A) from (3R)-3-hydroxytetradecanoyl-[acyl-carrier-protein] and UDP-N-acetyl-alpha-D-glucosamine: step 2/6. In terms of biological role, catalyzes the hydrolysis of UDP-3-O-myristoyl-N-acetylglucosamine to form UDP-3-O-myristoylglucosamine and acetate, the committed step in lipid A biosynthesis. The sequence is that of UDP-3-O-acyl-N-acetylglucosamine deacetylase from Paraburkholderia phytofirmans (strain DSM 17436 / LMG 22146 / PsJN) (Burkholderia phytofirmans).